The primary structure comprises 471 residues: Siroheme synthase (471 aa).

A precorrin-2 dehydrogenase /sirohydrochlorin ferrochelatase region spans residues 1–203; that stretch reads MDYLPLFADI…GDWESAEKTL (203 aa). Residues 22-23 and 43-44 each bind NAD(+); these read EV and KN. At S128 the chain carries Phosphoserine. The interval 215–471 is uroporphyrinogen-III C-methyltransferase; sequence GEIILVGAGP…DTKSSLINLA (257 aa). An S-adenosyl-L-methionine-binding site is contributed by P224. D247 serves as the catalytic Proton acceptor. The active-site Proton donor is the K269. S-adenosyl-L-methionine-binding positions include 300–302, I305, 330–331, M382, and A411; these read GGD and TA.

This sequence in the N-terminal section; belongs to the precorrin-2 dehydrogenase / sirohydrochlorin ferrochelatase family. It in the C-terminal section; belongs to the precorrin methyltransferase family.

The enzyme catalyses uroporphyrinogen III + 2 S-adenosyl-L-methionine = precorrin-2 + 2 S-adenosyl-L-homocysteine + H(+). The catalysed reaction is precorrin-2 + NAD(+) = sirohydrochlorin + NADH + 2 H(+). It carries out the reaction siroheme + 2 H(+) = sirohydrochlorin + Fe(2+). It functions in the pathway cofactor biosynthesis; adenosylcobalamin biosynthesis; precorrin-2 from uroporphyrinogen III: step 1/1. The protein operates within cofactor biosynthesis; adenosylcobalamin biosynthesis; sirohydrochlorin from precorrin-2: step 1/1. It participates in porphyrin-containing compound metabolism; siroheme biosynthesis; precorrin-2 from uroporphyrinogen III: step 1/1. Its pathway is porphyrin-containing compound metabolism; siroheme biosynthesis; siroheme from sirohydrochlorin: step 1/1. It functions in the pathway porphyrin-containing compound metabolism; siroheme biosynthesis; sirohydrochlorin from precorrin-2: step 1/1. Multifunctional enzyme that catalyzes the SAM-dependent methylations of uroporphyrinogen III at position C-2 and C-7 to form precorrin-2 via precorrin-1. Then it catalyzes the NAD-dependent ring dehydrogenation of precorrin-2 to yield sirohydrochlorin. Finally, it catalyzes the ferrochelation of sirohydrochlorin to yield siroheme. In Zymomonas mobilis subsp. mobilis (strain ATCC 31821 / ZM4 / CP4), this protein is Siroheme synthase.